Reading from the N-terminus, the 404-residue chain is Cysteine desulfurase IscS (404 aa).

Pyridoxal 5'-phosphate-binding positions include 75-76, Asn155, Gln183, and 203-205; these read AT and SAH. Position 206 is an N6-(pyridoxal phosphate)lysine (Lys206). Thr243 provides a ligand contact to pyridoxal 5'-phosphate. Cys328 functions as the Cysteine persulfide intermediate in the catalytic mechanism. Cys328 contributes to the [2Fe-2S] cluster binding site.

The protein belongs to the class-V pyridoxal-phosphate-dependent aminotransferase family. NifS/IscS subfamily. As to quaternary structure, homodimer. Forms a heterotetramer with IscU, interacts with other sulfur acceptors. Requires pyridoxal 5'-phosphate as cofactor.

It is found in the cytoplasm. The enzyme catalyses (sulfur carrier)-H + L-cysteine = (sulfur carrier)-SH + L-alanine. The protein operates within cofactor biosynthesis; iron-sulfur cluster biosynthesis. Its function is as follows. Master enzyme that delivers sulfur to a number of partners involved in Fe-S cluster assembly, tRNA modification or cofactor biosynthesis. Catalyzes the removal of elemental sulfur atoms from cysteine to produce alanine. Functions as a sulfur delivery protein for Fe-S cluster synthesis onto IscU, an Fe-S scaffold assembly protein, as well as other S acceptor proteins. The polypeptide is Cysteine desulfurase IscS (Azotobacter vinelandii (strain DJ / ATCC BAA-1303)).